Here is a 486-residue protein sequence, read N- to C-terminus: uncharacterized protein (486 aa).

A signal peptide spans 1–25; the sequence is MGTMRSVYLIIIIILFFAFISLSFG. 2 stretches are compositionally biased toward basic and acidic residues: residues 306 to 316 and 326 to 349; these read KKEEKENEESS and KKEE…KQEK. A disordered region spans residues 306 to 349; the sequence is KKEEKENEESSKTINQMQRHKKEEKSQTQETKKPSKNEMNKQEK.

This is an uncharacterized protein from Methanocaldococcus jannaschii (strain ATCC 43067 / DSM 2661 / JAL-1 / JCM 10045 / NBRC 100440) (Methanococcus jannaschii).